The chain runs to 54 residues: UPF0181 protein PM0480 (54 aa).

Belongs to the UPF0181 family.

In Pasteurella multocida (strain Pm70), this protein is UPF0181 protein PM0480.